The chain runs to 101 residues: Signal recognition particle 19 kDa protein (101 aa).

It belongs to the SRP19 family. As to quaternary structure, part of the signal recognition particle protein translocation system, which is composed of SRP and FtsY. Archaeal SRP consists of a 7S RNA molecule of 300 nucleotides and two protein subunits: SRP54 and SRP19.

It localises to the cytoplasm. Its function is as follows. Involved in targeting and insertion of nascent membrane proteins into the cytoplasmic membrane. Binds directly to 7S RNA and mediates binding of the 54 kDa subunit of the SRP. The protein is Signal recognition particle 19 kDa protein of Methanosarcina barkeri (strain Fusaro / DSM 804).